A 316-amino-acid polypeptide reads, in one-letter code: N-acetyl-gamma-glutamyl-phosphate reductase (316 aa).

The active site involves cysteine 136.

This sequence belongs to the NAGSA dehydrogenase family. Type 1 subfamily.

It is found in the cytoplasm. The enzyme catalyses N-acetyl-L-glutamate 5-semialdehyde + phosphate + NADP(+) = N-acetyl-L-glutamyl 5-phosphate + NADPH + H(+). The protein operates within amino-acid biosynthesis; L-arginine biosynthesis; N(2)-acetyl-L-ornithine from L-glutamate: step 3/4. Its function is as follows. Catalyzes the NADPH-dependent reduction of N-acetyl-5-glutamyl phosphate to yield N-acetyl-L-glutamate 5-semialdehyde. This is N-acetyl-gamma-glutamyl-phosphate reductase from Xanthomonas campestris pv. campestris (strain B100).